Here is a 338-residue protein sequence, read N- to C-terminus: 1-aminocyclopropane-1-carboxylate deaminase (338 aa).

Lys51 carries the post-translational modification N6-(pyridoxal phosphate)lysine. Ser78 functions as the Nucleophile in the catalytic mechanism.

The protein belongs to the ACC deaminase/D-cysteine desulfhydrase family. As to quaternary structure, homotrimer. Pyridoxal 5'-phosphate serves as cofactor.

The catalysed reaction is 1-aminocyclopropane-1-carboxylate + H2O = 2-oxobutanoate + NH4(+). Functionally, catalyzes a cyclopropane ring-opening reaction, the irreversible conversion of 1-aminocyclopropane-1-carboxylate (ACC) to ammonia and alpha-ketobutyrate. Allows growth on ACC as a nitrogen source. The protein is 1-aminocyclopropane-1-carboxylate deaminase of Variovorax paradoxus (strain S110).